Consider the following 252-residue polypeptide: MSDWNPSLYLHFSAERSRPAVELLARVPLENVEYVADLGCGPGNSTALLHQRWPAARITGIDSSPAMIAEARSALPDCQFVEADIRNWQPEQALDLIFANASLQWLPDHYELFPHLVSLLNPQGVLAVQMPDNWLEPTHVLMREVAWEQNYPDRGREPLAGVHAYYDILSEAGCEVDIWRITYYHQMPSHQAIIDWVTATGLRPWLQDLTESEQQLFLTRYHQMLEEQYPLQENGQILLAFPRLFIVARRTE.

It belongs to the methyltransferase superfamily. Tam family.

It localises to the cytoplasm. It catalyses the reaction trans-aconitate + S-adenosyl-L-methionine = (E)-3-(methoxycarbonyl)pent-2-enedioate + S-adenosyl-L-homocysteine. Functionally, catalyzes the S-adenosylmethionine monomethyl esterification of trans-aconitate. This Shigella flexneri serotype 5b (strain 8401) protein is Trans-aconitate 2-methyltransferase.